A 248-amino-acid chain; its full sequence is Probable phosphatase VPA0505 (248 aa).

Zn(2+)-binding residues include histidine 8, histidine 10, histidine 16, histidine 41, glutamate 74, histidine 102, histidine 132, aspartate 194, and histidine 196.

This sequence belongs to the PHP family. Requires Zn(2+) as cofactor.

This chain is Probable phosphatase VPA0505, found in Vibrio parahaemolyticus serotype O3:K6 (strain RIMD 2210633).